Reading from the N-terminus, the 283-residue chain is ATP phosphoribosyltransferase (283 aa).

It belongs to the ATP phosphoribosyltransferase family. Long subfamily. Mg(2+) is required as a cofactor.

It is found in the cytoplasm. It carries out the reaction 1-(5-phospho-beta-D-ribosyl)-ATP + diphosphate = 5-phospho-alpha-D-ribose 1-diphosphate + ATP. It participates in amino-acid biosynthesis; L-histidine biosynthesis; L-histidine from 5-phospho-alpha-D-ribose 1-diphosphate: step 1/9. Feedback inhibited by histidine. Functionally, catalyzes the condensation of ATP and 5-phosphoribose 1-diphosphate to form N'-(5'-phosphoribosyl)-ATP (PR-ATP). Has a crucial role in the pathway because the rate of histidine biosynthesis seems to be controlled primarily by regulation of HisG enzymatic activity. This Rhodococcus jostii (strain RHA1) protein is ATP phosphoribosyltransferase.